The primary structure comprises 451 residues: Tubulin gamma-1 chain (451 aa).

Residue S131 is modified to Phosphoserine; by BRSK1. 142–148 is a binding site for GTP; that stretch reads AGGTGSG.

This sequence belongs to the tubulin family. Component of the gamma-tubulin ring complex (gTuRC) consisting of TUBGCP2, TUBGCP3, TUBGCP4, TUBGCP5 and TUBGCP6 and gamma-tubulin TUBG1 or TUBG2. TUBGCP2, TUBGCP3, TUBGCP4, TUBGCP5 and TUBGCP6 assemble in a 5:5:2:1:1 stoichiometry; each is associated with a gamma-tubulin, thereby arranging 14 gamma-tubulins in a helical manner. Gamma-tubulin at the first position is blocked by TUBGCP3 at the last position, allowing 13 protafilaments to grow into a microtubule. The gTuRC (via TUBGCP3 and TUBGCP6) interacts with ACTB and MZT1; the interactions form a luminal bridge that stabilizes the initial structure during complex assembly. The gTuRC (via TUBGCP2) interacts with MZT2A/MZT2B and CDK5RAP2 (via CM1 motif); the interactions play a role in gTuRC activation. Interacts with alpha-beta tubulin heterodimers; the interaction allows microtubules to nucleate from the gTuRC. Interacts with B9D2. Interacts with CDK5RAP2; the interaction is leading to centrosomal localization of TUBG1 and CDK5RAP2. Interacts with CIMAP3. Interacts with SAS6 and NUP62 at the centrosome. Interacts with EML3 (phosphorylated at 'Thr-881') and HAUS8. Interacts with DNM2; this interaction may participate in centrosome cohesion. Interacts with CCDC66. Phosphorylation at Ser-131 by BRSK1 regulates centrosome duplication, possibly by mediating relocation of gamma-tubulin and its associated proteins from the cytoplasm to the centrosome.

The protein localises to the cytoplasm. Its subcellular location is the cytoskeleton. It is found in the microtubule organizing center. It localises to the centrosome. The protein resides in the spindle. In terms of biological role, tubulin is the major constituent of microtubules, protein filaments consisting of alpha- and beta-tubulin heterodimers. Gamma-tubulin is a key component of the gamma-tubulin ring complex (gTuRC) which mediates microtubule nucleation. The gTuRC regulates the minus-end nucleation of alpha-beta tubulin heterodimers that grow into microtubule protafilaments, a critical step in centrosome duplication and spindle formation. The protein is Tubulin gamma-1 chain of Bos taurus (Bovine).